Here is a 942-residue protein sequence, read N- to C-terminus: Valine--tRNA ligase (942 aa).

The 'HIGH' region motif lies at 43–53 (PNVTGTLHMGH). The 'KMSKS' region motif lies at 551 to 555 (KMSKS). Residue Lys-554 participates in ATP binding. The stretch at 876 to 942 (EGLVDLDAER…AGLREQRAKL (67 aa)) forms a coiled coil.

The protein belongs to the class-I aminoacyl-tRNA synthetase family. ValS type 1 subfamily. Monomer.

It is found in the cytoplasm. The catalysed reaction is tRNA(Val) + L-valine + ATP = L-valyl-tRNA(Val) + AMP + diphosphate. Its function is as follows. Catalyzes the attachment of valine to tRNA(Val). As ValRS can inadvertently accommodate and process structurally similar amino acids such as threonine, to avoid such errors, it has a 'posttransfer' editing activity that hydrolyzes mischarged Thr-tRNA(Val) in a tRNA-dependent manner. This chain is Valine--tRNA ligase, found in Stenotrophomonas maltophilia (strain R551-3).